Reading from the N-terminus, the 628-residue chain is U-box domain-containing protein 10 (628 aa).

Positions 242–316 (TIPEDFLCPI…SQWCTKHNIE (75 aa)) constitute a U-box domain. ARM repeat units lie at residues 373–413 (TDNR…NLSI), 415–454 (EHNK…SLSL), 456–495 (DENK…NLCI), 497–537 (QGNK…VLAS), and 539–578 (QVAK…CLCK).

The catalysed reaction is S-ubiquitinyl-[E2 ubiquitin-conjugating enzyme]-L-cysteine + [acceptor protein]-L-lysine = [E2 ubiquitin-conjugating enzyme]-L-cysteine + N(6)-ubiquitinyl-[acceptor protein]-L-lysine.. It participates in protein modification; protein ubiquitination. In terms of biological role, functions as an E3 ubiquitin ligase. The sequence is that of U-box domain-containing protein 10 (PUB10) from Arabidopsis thaliana (Mouse-ear cress).